The sequence spans 248 residues: 3-deoxy-manno-octulosonate cytidylyltransferase (248 aa).

Belongs to the KdsB family.

It is found in the cytoplasm. The catalysed reaction is 3-deoxy-alpha-D-manno-oct-2-ulosonate + CTP = CMP-3-deoxy-beta-D-manno-octulosonate + diphosphate. The protein operates within nucleotide-sugar biosynthesis; CMP-3-deoxy-D-manno-octulosonate biosynthesis; CMP-3-deoxy-D-manno-octulosonate from 3-deoxy-D-manno-octulosonate and CTP: step 1/1. Its pathway is bacterial outer membrane biogenesis; lipopolysaccharide biosynthesis. In terms of biological role, activates KDO (a required 8-carbon sugar) for incorporation into bacterial lipopolysaccharide in Gram-negative bacteria. This chain is 3-deoxy-manno-octulosonate cytidylyltransferase, found in Desulfosudis oleivorans (strain DSM 6200 / JCM 39069 / Hxd3) (Desulfococcus oleovorans).